The primary structure comprises 483 residues: MEEGDGGLRSLVPGGPLLLVLYGLLEASGGGRALPQLSDDIPFRVNWPGTEFSLPTTGVLYKEDNYIIMTTAHKEKYKCILPLVTSGDEEEEKDYKGPNPRELLEPLFKQSSCSYRIESYWTYEVCHGKHIRQYHEEKETGQKVNIHEYYLGNMLAKNLLYEKEREAKENEKSNEIPTKNIEGQMTPYYPVGMGNGTPCSLKQNRPRSSTVMYICHPESKHEILSVAEVTTCEYEVVILTPLLCSHPKYKFRASPVNDIFCQSLPGSPFKPLTLRQLEQQEEILRVPFRRNKEEDLPSAKEERFPAIHKPIAVGSQPVLTVGTTHISKLTDDQLIKEFLSGSYCFHGGVGWWKYEFCYGKHVHQYHEDKDNGKTSVVVGTWNQEEHVEWAKKNTARAYHLQDDGTQTVRMVSHFYGNGDICDITDKPRQVTVKLKCKESDSPHAVTVYMLEPHSCQYILGVESPVICKILDTADENGLLSLPN.

An N-terminal signal peptide occupies residues 1–33; it reads MEEGDGGLRSLVPGGPLLLVLYGLLEASGGGRA. 2 consecutive MRH domains span residues 111–246 and 342–469; these read SSCS…LCSH and SYCF…ICKI. Cysteine 113 and cysteine 126 are disulfide-bonded. Asparagine 195 carries an N-linked (GlcNAc...) asparagine glycan. 5 disulfides stabilise this stretch: cysteine 199-cysteine 232, cysteine 215-cysteine 244, cysteine 344-cysteine 357, cysteine 421-cysteine 455, and cysteine 436-cysteine 467.

In terms of assembly, may form a complex with OS9, HSPA5, SYVN1, and SEL1L with which it interacts directly. Interacts (via PRKCSH 2 domain) with KREMEN2 (when glycosylated). Interacts with HSPA5. Post-translationally, N-glycosylated.

It localises to the endoplasmic reticulum lumen. Probable lectin that binds selectively to improperly folded lumenal proteins. May function in endoplasmic reticulum quality control and endoplasmic reticulum-associated degradation (ERAD) of both non-glycosylated proteins and glycoproteins. The chain is Endoplasmic reticulum lectin 1 (Erlec1) from Mus musculus (Mouse).